Reading from the N-terminus, the 1408-residue chain is DNA-directed RNA polymerase subunit beta (1408 aa).

A disordered region spans residues 1383-1408 (PERQRSFGGDFLGGGDGEERKTGTEA). The span at 1399-1408 (GEERKTGTEA) shows a compositional bias: basic and acidic residues.

The protein belongs to the RNA polymerase beta chain family. In terms of assembly, the RNAP catalytic core consists of 2 alpha, 1 beta, 1 beta' and 1 omega subunit. When a sigma factor is associated with the core the holoenzyme is formed, which can initiate transcription.

The catalysed reaction is RNA(n) + a ribonucleoside 5'-triphosphate = RNA(n+1) + diphosphate. In terms of biological role, DNA-dependent RNA polymerase catalyzes the transcription of DNA into RNA using the four ribonucleoside triphosphates as substrates. The sequence is that of DNA-directed RNA polymerase subunit beta from Myxococcus xanthus (strain DK1622).